We begin with the raw amino-acid sequence, 390 residues long: Alanine racemase (390 aa).

The active-site Proton acceptor; specific for D-alanine is K46. K46 bears the N6-(pyridoxal phosphate)lysine mark. Position 144 (R144) interacts with substrate. Y275 serves as the catalytic Proton acceptor; specific for L-alanine. Residue M323 coordinates substrate.

It belongs to the alanine racemase family. It depends on pyridoxal 5'-phosphate as a cofactor.

The enzyme catalyses L-alanine = D-alanine. It functions in the pathway amino-acid biosynthesis; D-alanine biosynthesis; D-alanine from L-alanine: step 1/1. In terms of biological role, catalyzes the interconversion of L-alanine and D-alanine. May also act on other amino acids. In Mycolicibacterium vanbaalenii (strain DSM 7251 / JCM 13017 / BCRC 16820 / KCTC 9966 / NRRL B-24157 / PYR-1) (Mycobacterium vanbaalenii), this protein is Alanine racemase (alr).